The primary structure comprises 145 residues: Maximins 5/H4 type 2 (145 aa).

Residues 1–18 (MNFKYIVAVSFLIASAYA) form the signal peptide. Propeptides lie at residues 19–43 (RSVQNDEQSLSQRDVLEEESLREIR) and 74–124 (TAEE…KEKR). L144 is modified (leucine amide).

This sequence belongs to the bombinin family. Expressed by the skin glands.

The protein resides in the secreted. Maximin-5 shows antibacterial activity against both Gram-positive and Gram-negative bacteria. The only exception is the resistance of E.coli. Also shows antimicrobial activity against fungi C.albicans, A.flavus and P.uticale. It has little hemolytic activity. It does not possess a significant cytotoxicity against tumor cell lines. It does not possess a significant anti-HIV activity. Its function is as follows. Maximin-H4 shows antibacterial activity against both Gram-positive and Gram-negative bacteria. It also shows antimicrobial activity against the fungus C.albicans. Shows strong hemolytic activity. In Bombina maxima (Giant fire-bellied toad), this protein is Maximins 5/H4 type 2.